We begin with the raw amino-acid sequence, 574 residues long: Sulfate adenylyltransferase (574 aa).

Residues 1–169 (MSNPPHGGVL…VEAINKLNHY (169 aa)) form an N-terminal region. The interval 170 to 394 (DYVALRYTPA…LRESSRPRST (225 aa)) is catalytic. Position 197 (Q197) interacts with sulfate. Residues 197 to 200 (QTRN) and 291 to 294 (GRDH) contribute to the ATP site. Active-site residues include T198, R199, and N200. Sulfate is bound at residue R199. Residue A295 participates in sulfate binding. Residue V333 coordinates ATP. Residues 395-574 (QGFTIFLTGY…LETEGFFDRA (180 aa)) form an allosteric regulation domain; adenylyl-sulfate kinase-like region. 3'-phosphoadenylyl sulfate-binding positions include 434 to 437 (DTVR), R451, 477 to 478 (IA), and R516.

It in the N-terminal section; belongs to the sulfate adenylyltransferase family. The protein in the C-terminal section; belongs to the APS kinase family. Homohexamer. Dimer of trimers.

It localises to the cytoplasm. The enzyme catalyses sulfate + ATP + H(+) = adenosine 5'-phosphosulfate + diphosphate. Its pathway is sulfur metabolism; hydrogen sulfide biosynthesis; sulfite from sulfate: step 1/3. With respect to regulation, allosterically inhibited by 3'-phosphoadenosine 5'-phosphosulfate (PAPS). In terms of biological role, catalyzes the first intracellular reaction of sulfate assimilation, forming adenosine-5'-phosphosulfate (APS) from inorganic sulfate and ATP. Plays an important role in sulfate activation as a component of the biosynthesis pathway of sulfur-containing amino acids. The protein is Sulfate adenylyltransferase of Aspergillus clavatus (strain ATCC 1007 / CBS 513.65 / DSM 816 / NCTC 3887 / NRRL 1 / QM 1276 / 107).